A 376-amino-acid chain; its full sequence is MEKLKQQFSKDRLITPSSNLVRNYIDSIPVDLLIDILSRFPPKSIARFYCVSKLWESILRGPDFTELYLTKSVALRRLFFALKVNTELLVFSSPQPQIPDENSSLVVEATPYKCFPKKIPTEICTALGGLVFLGTFLSRQPLVIVNPLTGEFITLPKLKTIGTKRFSFGYDPISKKFKVLCVTWSPCGTLPNIHQVLTLETGERLWRTIHDPVIPRYSINYDAICINGVLYSEAYYQGSSKIVCFDFKIEKVSFVNIDGMCNLRLFNCKGKLGVHQYDVQSRNEKLVFHVLEDAEKHKWSKSICILPSVVSGKRIVEITCTGEIVFSPSGGSLHPFYIFFYNIERKTYTRVQIKGFKKYADCVHTFLDFVEDTKLI.

The F-box domain maps to 22–71; that stretch reads RNYIDSIPVDLLIDILSRFPPKSIARFYCVSKLWESILRGPDFTELYLTK.

This chain is Putative F-box protein At1g53370, found in Arabidopsis thaliana (Mouse-ear cress).